A 259-amino-acid chain; its full sequence is PF03932 family protein CutC (259 aa).

It belongs to the CutC family. Homodimer.

It localises to the cytoplasm. The sequence is that of PF03932 family protein CutC from Salmonella typhi.